A 170-amino-acid polypeptide reads, in one-letter code: Cytochrome c-type biogenesis protein CcmE (170 aa).

Residues 1 to 7 (MTRKQRR) are Cytoplasmic-facing. A helical; Signal-anchor for type II membrane protein membrane pass occupies residues 8–28 (LTIIGGALFVLAVAAGLVLNA). Residues 29-170 (LRDSIVFFST…GEKTAAGATQ (142 aa)) are Periplasmic-facing. Heme contacts are provided by His-122 and Tyr-126. The segment covering 137–146 (KQGHWKDDYG) has biased composition (basic and acidic residues). The disordered stretch occupies residues 137–170 (KQGHWKDDYGKPQAAKPGPVSMREGEKTAAGATQ).

The protein belongs to the CcmE/CycJ family.

It is found in the cell inner membrane. Its function is as follows. Heme chaperone required for the biogenesis of c-type cytochromes. Transiently binds heme delivered by CcmC and transfers the heme to apo-cytochromes in a process facilitated by CcmF and CcmH. The chain is Cytochrome c-type biogenesis protein CcmE from Bradyrhizobium sp. (strain BTAi1 / ATCC BAA-1182).